The following is a 95-amino-acid chain: Large ribosomal subunit protein bL27 (95 aa).

Residues 1–12 (MLLIKKINLQFF) constitute a propeptide that is removed on maturation. Residues 17-37 (GVGSTKNGRDSNPKYLGAKKS) are disordered.

This sequence belongs to the bacterial ribosomal protein bL27 family. The N-terminus is cleaved by ribosomal processing cysteine protease Prp.

The sequence is that of Large ribosomal subunit protein bL27 from Malacoplasma penetrans (strain HF-2) (Mycoplasma penetrans).